The following is a 368-amino-acid chain: CST complex subunit STN1 (368 aa).

Positions 1 to 185 (MQPGSSRCEE…KIYDQPFRSS (185 aa)) are interaction with CTC1. Residues 57 to 155 (VDVLGTVVGV…EIHATAYYKV (99 aa)) constitute a DNA-binding region (OB). 2 winged helix-turn-helix (wHTH) regions span residues 191-295 (EALS…YVTR) and 296-368 (EDKD…YTAF).

This sequence belongs to the STN1 family. In terms of assembly, component of the CST complex, composed of TEN1/C17orf106, CTC1/C17orf68 and STN1; in the complex interacts directly with TEN1 and CTC1. Interacts with ACD/TPP1, POT1 and POLA1.

The protein localises to the nucleus. The protein resides in the chromosome. Its subcellular location is the telomere. Its function is as follows. Component of the CST complex proposed to act as a specialized replication factor promoting DNA replication under conditions of replication stress or natural replication barriers such as the telomere duplex. The CST complex binds single-stranded DNA with high affinity in a sequence-independent manner, while isolated subunits bind DNA with low affinity by themselves. Initially the CST complex has been proposed to protect telomeres from DNA degradation. However, the CST complex has been shown to be involved in several aspects of telomere replication. The CST complex inhibits telomerase and is involved in telomere length homeostasis; it is proposed to bind to newly telomerase-synthesized 3' overhangs and to terminate telomerase action implicating the association with the ACD:POT1 complex thus interfering with its telomerase stimulation activity. The CST complex is also proposed to be involved in fill-in synthesis of the telomeric C-strand probably implicating recruitment and activation of DNA polymerase alpha. The CST complex facilitates recovery from many forms of exogenous DNA damage; seems to be involved in the re-initiation of DNA replication at repaired forks and/or dormant origins. Required for efficicient replication of the duplex region of the telomere. Promotes efficient replication of lagging-strand telomeres. Promotes general replication start following replication-fork stalling implicating new origin firing. May be in involved in C-strand fill-in during late S/G2 phase independent of its role in telomere duplex replication. The protein is CST complex subunit STN1 of Macaca fascicularis (Crab-eating macaque).